Reading from the N-terminus, the 421-residue chain is C2H2 type master regulator of conidiophore development brlA (421 aa).

2 consecutive C2H2-type zinc fingers follow at residues 309–333 (FKCK…MKSH) and 339–364 (HVCW…TKTH). A disordered region spans residues 379–421 (ESSPDYDPDFRGQLTPDGLPIRGSTLDDPMPNSREYSVDGLDD).

It localises to the nucleus. Its function is as follows. BrlA, abaA and wetA are pivotal regulators of conidiophore development and conidium maturation. They act individually and together to regulate their own expression and that of numerous other sporulation-specific genes. Binds promoters of target genes at brlA response elements (BREs) containing the conserved sequence 5'-(C/A)(A/G)AGGG(G/A)-3'. Required for conidiophores formation. Controls expression of abaA. This Aspergillus oryzae (strain ATCC 42149 / RIB 40) (Yellow koji mold) protein is C2H2 type master regulator of conidiophore development brlA.